The chain runs to 875 residues: Probable dipeptidyl-aminopeptidase B (875 aa).

The disordered stretch occupies residues 1-90 (MSEPKPIQDT…ASSETTPPRK (90 aa)). At 1-98 (MSEPKPIQDT…RKGVDRKLKK (98 aa)) the chain is on the cytoplasmic side. Residues 19-28 (SSISSASTTS) are compositionally biased toward low complexity. The span at 33-46 (RLAEESEKNHDASS) shows a compositional bias: basic and acidic residues. A helical; Signal-anchor for type II membrane protein membrane pass occupies residues 99–119 (VLLIVGGFFVAAWIVSLVVFL). The Vacuolar segment spans residues 120-875 (TNKSYKHGSQ…VNDAKPKIES (756 aa)). 2 N-linked (GlcNAc...) asparagine glycosylation sites follow: Asn354 and Asn567. Residues 689–715 (VDFQSSDGGRRTTRSPRRATGRPSATS) are disordered. Basic residues predominate over residues 699 to 708 (RTTRSPRRAT). Residue Ser726 is the Charge relay system of the active site. Asn785 is a glycosylation site (N-linked (GlcNAc...) asparagine). Catalysis depends on charge relay system residues Asp803 and His836.

The protein belongs to the peptidase S9B family.

The protein resides in the vacuole membrane. It carries out the reaction Release of an N-terminal dipeptide, Xaa-Yaa-|-Zaa-, from a polypeptide, preferentially when Yaa is Pro, provided Zaa is neither Pro nor hydroxyproline.. Functionally, type IV dipeptidyl-peptidase which removes N-terminal dipeptides sequentially from polypeptides having unsubstituted N-termini provided that the penultimate residue is proline. This is Probable dipeptidyl-aminopeptidase B (DAPB) from Verticillium alfalfae (strain VaMs.102 / ATCC MYA-4576 / FGSC 10136) (Verticillium wilt of alfalfa).